We begin with the raw amino-acid sequence, 202 residues long: 3-isopropylmalate dehydratase small subunit (202 aa).

Belongs to the LeuD family. LeuD type 1 subfamily. In terms of assembly, heterodimer of LeuC and LeuD.

It carries out the reaction (2R,3S)-3-isopropylmalate = (2S)-2-isopropylmalate. It participates in amino-acid biosynthesis; L-leucine biosynthesis; L-leucine from 3-methyl-2-oxobutanoate: step 2/4. Catalyzes the isomerization between 2-isopropylmalate and 3-isopropylmalate, via the formation of 2-isopropylmaleate. The sequence is that of 3-isopropylmalate dehydratase small subunit from Novosphingobium aromaticivorans (strain ATCC 700278 / DSM 12444 / CCUG 56034 / CIP 105152 / NBRC 16084 / F199).